The primary structure comprises 101 residues: Large ribosomal subunit protein bL21 (101 aa).

The protein belongs to the bacterial ribosomal protein bL21 family. As to quaternary structure, part of the 50S ribosomal subunit. Contacts protein L20.

In terms of biological role, this protein binds to 23S rRNA in the presence of protein L20. In Corynebacterium aurimucosum (strain ATCC 700975 / DSM 44827 / CIP 107346 / CN-1) (Corynebacterium nigricans), this protein is Large ribosomal subunit protein bL21.